Here is a 211-residue protein sequence, read N- to C-terminus: Methylthioribulose-1-phosphate dehydratase (211 aa).

Positions 94 and 96 each coordinate Zn(2+).

The protein belongs to the aldolase class II family. MtnB subfamily. It depends on Zn(2+) as a cofactor.

The catalysed reaction is 5-(methylsulfanyl)-D-ribulose 1-phosphate = 5-methylsulfanyl-2,3-dioxopentyl phosphate + H2O. The protein operates within amino-acid biosynthesis; L-methionine biosynthesis via salvage pathway; L-methionine from S-methyl-5-thio-alpha-D-ribose 1-phosphate: step 2/6. In terms of biological role, catalyzes the dehydration of methylthioribulose-1-phosphate (MTRu-1-P) into 2,3-diketo-5-methylthiopentyl-1-phosphate (DK-MTP-1-P). In Pseudoalteromonas translucida (strain TAC 125), this protein is Methylthioribulose-1-phosphate dehydratase.